Consider the following 332-residue polypeptide: 3'(2'),5'-bisphosphate nucleotidase (332 aa).

Aspartate 49 functions as the Proton acceptor in the catalytic mechanism. Mg(2+) is bound by residues glutamate 73, aspartate 129, isoleucine 131, and aspartate 132. The Proton acceptor role is filled by threonine 134. Residues threonine 134, serine 245, lysine 248, arginine 262, and aspartate 274 each contribute to the adenosine 3',5'-bisphosphate site. 4 residues coordinate AMP: serine 245, lysine 248, arginine 262, and aspartate 274. Residue aspartate 274 participates in Mg(2+) binding.

It belongs to the inositol monophosphatase superfamily. The cofactor is Mg(2+).

The enzyme catalyses 3'-phosphoadenylyl sulfate + H2O = adenosine 5'-phosphosulfate + phosphate. The catalysed reaction is adenosine 3',5'-bisphosphate + H2O = AMP + phosphate. It catalyses the reaction adenosine 2',5'-bisphosphate + H2O = AMP + phosphate. It carries out the reaction 1D-myo-inositol 1,4-bisphosphate + H2O = 1D-myo-inositol 4-phosphate + phosphate. The enzyme catalyses 1D-myo-inositol 1,3,4-trisphosphate + H2O = 1D-myo-inositol 3,4-bisphosphate + phosphate. Phosphatase that converts adenosine 3'-phosphate 5'-phosphosulfate (PAPS) to adenosine 5'-phosphosulfate (APS) and 3'(2')-phosphoadenosine 5'-phosphate (PAP) to AMP. Is also able to hydrolyze inositol 1,4-bisphosphate and inositol 1,3,4-trisphosphate. This is 3'(2'),5'-bisphosphate nucleotidase from Dictyostelium discoideum (Social amoeba).